We begin with the raw amino-acid sequence, 461 residues long: Photosystem II CP43 reaction center protein (461 aa).

Positions 1–2 (ME) are excised as a propeptide. N-acetylthreonine is present on T3. At T3 the chain carries Phosphothreonine. 5 helical membrane passes run 57 to 81 (LFEV…PHIA), 122 to 143 (LIGP…KDKN), 166 to 188 (KAMY…RIIT), 243 to 263 (TPWP…LSYS), and 279 to 300 (WFNN…ASQA). Residue E355 coordinates [CaMn4O5] cluster. A helical transmembrane segment spans residues 435-459 (RARAAAAGFEKGIDRVDEPVLSMRP).

Belongs to the PsbB/PsbC family. PsbC subfamily. PSII is composed of 1 copy each of membrane proteins PsbA, PsbB, PsbC, PsbD, PsbE, PsbF, PsbH, PsbI, PsbJ, PsbK, PsbL, PsbM, PsbT, PsbX, PsbY, PsbZ, Psb30/Ycf12, at least 3 peripheral proteins of the oxygen-evolving complex and a large number of cofactors. It forms dimeric complexes. Binds multiple chlorophylls and provides some of the ligands for the Ca-4Mn-5O cluster of the oxygen-evolving complex. It may also provide a ligand for a Cl- that is required for oxygen evolution. PSII binds additional chlorophylls, carotenoids and specific lipids. is required as a cofactor.

Its subcellular location is the plastid. The protein localises to the chloroplast thylakoid membrane. In terms of biological role, one of the components of the core complex of photosystem II (PSII). It binds chlorophyll and helps catalyze the primary light-induced photochemical processes of PSII. PSII is a light-driven water:plastoquinone oxidoreductase, using light energy to abstract electrons from H(2)O, generating O(2) and a proton gradient subsequently used for ATP formation. The chain is Photosystem II CP43 reaction center protein from Chlamydomonas moewusii (Chlamydomonas eugametos).